Here is a 55-residue protein sequence, read N- to C-terminus: Small ribosomal subunit protein uS14 (55 aa).

Residues 1 to 20 (MSFEPSGPHSHRKPFGKGSR) are disordered. 4 residues coordinate Zn(2+): cysteine 22, cysteine 25, cysteine 38, and cysteine 41.

Belongs to the universal ribosomal protein uS14 family. Zn(2+) is required as a cofactor.

The polypeptide is Small ribosomal subunit protein uS14 (RPS29) (Encephalitozoon cuniculi (strain GB-M1) (Microsporidian parasite)).